Here is a 554-residue protein sequence, read N- to C-terminus: Arginine--tRNA ligase (554 aa).

The short motif at 129–139 (ANPTGPLHIGH) is the 'HIGH' region element.

This sequence belongs to the class-I aminoacyl-tRNA synthetase family. Monomer.

Its subcellular location is the cytoplasm. The catalysed reaction is tRNA(Arg) + L-arginine + ATP = L-arginyl-tRNA(Arg) + AMP + diphosphate. This Citrifermentans bemidjiense (strain ATCC BAA-1014 / DSM 16622 / JCM 12645 / Bem) (Geobacter bemidjiensis) protein is Arginine--tRNA ligase.